We begin with the raw amino-acid sequence, 159 residues long: Endoribonuclease YbeY (159 aa).

Residues histidine 114, histidine 118, and histidine 124 each coordinate Zn(2+).

This sequence belongs to the endoribonuclease YbeY family. The cofactor is Zn(2+).

Its subcellular location is the cytoplasm. In terms of biological role, single strand-specific metallo-endoribonuclease involved in late-stage 70S ribosome quality control and in maturation of the 3' terminus of the 16S rRNA. The protein is Endoribonuclease YbeY of Pectobacterium carotovorum subsp. carotovorum (strain PC1).